Reading from the N-terminus, the 468-residue chain is Histone acetyltransferase type B catalytic subunit (468 aa).

Ser-8 is subject to Phosphoserine. Interaction with histone H4 N-terminus stretches follow at residues 44 to 46 (EEE) and 208 to 210 (YKF). Acetyl-CoA contacts are provided by residues 248–250 (FLI) and 255–261 (QKSGNGS). Glu-283 functions as the Proton donor/acceptor in the catalytic mechanism. A disordered region spans residues 442 to 468 (SSNLKRKLDDDENTEGSSSKKARVEDA).

It belongs to the HAT1 family. In terms of assembly, component of the HAT-B complex composed of at least HAT1 and HAT2. The HAT-B complex binds to histone H4 tail. In the nucleus, interacts with GSK1 and SSB1. In the cytoplasm, interacts with ATG3 and ATG9. In terms of processing, phosphorylated at Ser-8 by GSK1 in the nucleus which impairs its translocation to the cytoplasm through interfering the interaction between HAT1 and SSB1. Dephosphorylation under nutrient starvation conditions promotes the interaction between HAT1 and SSB1 and results in the translocation of HAT1 from the nucleus to the cytoplasm in order to acetylate ATG3 and ATG9.

The protein resides in the nucleus. Its subcellular location is the cytoplasm. It is found in the preautophagosomal structure. It carries out the reaction L-lysyl-[protein] + acetyl-CoA = N(6)-acetyl-L-lysyl-[protein] + CoA + H(+). Its function is as follows. Catalytic component of the histone acetylase B (HAT-B) complex. Has intrinsic substrate specificity that modifies lysine in recognition sequence GXGKXG. Involved in DNA double-strand break repair. Required for appressorium turgor pressure, autophagy and conidial nuclear degradation. During the germination process and upon starvation conditions, translocates from the nucleus to the cytoplasm where it acetylates ATG3 at 'lys-262' and 'Lys-267', thus influencing autophagy through controlling ATG3-ATG8 interaction. Also acetylates ATG9 at 'Lys-621' to regulate ATG9 binding to vesicles, which is also important for autophagy and pathogenicity. The chain is Histone acetyltransferase type B catalytic subunit from Pyricularia oryzae (strain 70-15 / ATCC MYA-4617 / FGSC 8958) (Rice blast fungus).